A 603-amino-acid chain; its full sequence is Adenine deaminase (603 aa).

Belongs to the metallo-dependent hydrolases superfamily. Adenine deaminase family. In terms of assembly, homodimer. The cofactor is Mn(2+).

It carries out the reaction adenine + H2O + H(+) = hypoxanthine + NH4(+). The chain is Adenine deaminase from Klebsiella pneumoniae subsp. pneumoniae (strain ATCC 700721 / MGH 78578).